The chain runs to 260 residues: 3-methyl-2-oxobutanoate hydroxymethyltransferase (260 aa).

Mg(2+)-binding residues include aspartate 42 and aspartate 81. 3-methyl-2-oxobutanoate contacts are provided by residues 42–43, aspartate 81, and lysine 109; that span reads DS. Glutamate 111 serves as a coordination point for Mg(2+). Catalysis depends on glutamate 178, which acts as the Proton acceptor.

It belongs to the PanB family. Homodecamer; pentamer of dimers. Mg(2+) is required as a cofactor.

It localises to the cytoplasm. It carries out the reaction 3-methyl-2-oxobutanoate + (6R)-5,10-methylene-5,6,7,8-tetrahydrofolate + H2O = 2-dehydropantoate + (6S)-5,6,7,8-tetrahydrofolate. Its pathway is cofactor biosynthesis; (R)-pantothenate biosynthesis; (R)-pantoate from 3-methyl-2-oxobutanoate: step 1/2. Functionally, catalyzes the reversible reaction in which hydroxymethyl group from 5,10-methylenetetrahydrofolate is transferred onto alpha-ketoisovalerate to form ketopantoate. The protein is 3-methyl-2-oxobutanoate hydroxymethyltransferase of Vesicomyosocius okutanii subsp. Calyptogena okutanii (strain HA).